The primary structure comprises 3003 residues: MEEKQQIILANQDGGTVTGGAPTFFVILKQPGNGKTDQGILVTNRDARALLSRESSPGKSKEKICLPADCTVGKITVTLDNNSMWNEFHNRSTEMILTKQGRRMFPYCRYWITGLDSNLKYILVMDISPVDSHRYKWNGRWWEPSGKAEPHILGRVFIHPESPSTGHYWMHQPVSFYKLKLTNNTLDQEGHIILHSMHRYLPRLHLVPAEKATEVIQLNGPGVHTFTFPQTEFFAVTAYQNIQITQLKIDYNPFAKGFRDDGLSSKPQREGKQRNSSDQEGNSVSSSPAHRVRLTEGEGSEIHSGDFDPVLRGHEASSLSLEKAPHNVKQDFLGFMNTDSTHEVPQLKHEISESRIVNSFEDDSQISSPSNPNGNFNVVIKEEPLDDYDYELGECPEGITVKQEETDEETDVYSNSDDDPILEKQLKRHNKVDNLEADHPSYKWLPNSPGVAKAKMFKLDAGKMPVVYLEPCAVTKSTVKISELPDNMLSTSRKDKSMLAELEYLPAYIENSDGTDFCLSKDSENSLRKHSPDLRIVQKYTLLKEPNWKYPDILDNSSTERIHDSSKGSTAESFSGKEDLGKKRTTMLKMAIPSKTVTASHSASPNTPGKRGRPRKLRLSKAGRPPKNTGKSLTAAKNIPVGPGSTFPDVKPDLEDVDGVLFVSFESKEALDIHAVDGTTEEPSSLQTTTTNDSGCRTRISQLEKELIEDLKSLRHKQVIHPALQEVGLKLNSVDPTVSIDLKYLGVQLPLAPATSFPLWNVTGTNPASPDAGFPFVSRTGKTNDFTKIKGWRGKFQNASASRNEGGNSEASLKNRSAFCSDKLDEYLENEGKLMETNIGFSSNAPTSPVVYQLPTKSTSYVRTLDSVLKKQSTISPSTSHSVKPQSVTTASRKTKAQNKQTTLSGRTKSSYKSILPYPVSPKQKNSHVSQGDKITKNSLSSTSDNQVTNLVVPSVDENAFPKQISLRQAQQQHLQQQGTRPPGLSKSQVKLMDLEDCALWEGKPRTYITEERADVSLTTLLTAQASLKTKPIHTIIRKRAPPCNNDFCRLGCVCSSLALEKRQPAHCRRPDCMFGCTCLKRKVVLVKGGSKTKHFHKKAANRDPLFYDTLGEEGREGGGVREDEEQLKEKKKRKKLEYTVCEAEPEQPVRHYPLWVKVEGEVDPEPVYIPTPSVIEPIKPLVLPQPDLSSTTKGKLTPGIKPARTYTPKPNPVIREEDKDPVYLYFESMMTCARVRVYERKKEEQRQLSPPLSPSSSFQQQSSCYSSPENRVTKELDSEQTLKQLICDLEDDSDKSQEKSWKSSCNEGESSSTSYVHQRSPGGPTKLIEIISDCNWEEDRNKILSILSQHINSNMPQSLKVGSFIIELASQRKCRGEKTPPVYSSRVKISMPSSQDQDDMAEKSGSETPDGPLSPGKMDDISPVQTDALDSVRERLHGGKGLPFYAGLSPSGKLVAYKRKPSSTTSGLIQVASNAKVAASRKPRTLLPSTSNSKMASSGPATNRSGKNLKAFVPAKRPIAARPSPGGVFTQFVMSKVGALQQKIPGVRTPQPLTGPQKFSIRPSPVMVVTPVVSSEQVQVCSTVAAAVTTSPQVFLENVTAVPSLTANSDMGAKEATYSSSASTAGVVEISETNNTTLVTSTQSTATVNLTKTTGITTSPVASVSFAKPLVASPTITLPVASTASTSIVMVTTAASSSVVTTPTSSLSSVPIILSGINGSPPVSQRPENAPQIPVTTPQISSNNVKRTGPRLLHPNGQIVQLLPLHQIRGSNAQPSLQPVVFRNPGSMVGIRLPAPCKSSETPSSSASSSAFSVMSPVIQAVGSSPTVNVISQAPSLLSSGSSFVSQAGTLTLRISPPETQNLASKTGSESKITPSTGGQPVGTASLIPLQSGSFALLQLPGQKPIPSSVLQHVASLQIKKESQSTDQKDETNSIKREEETKKALPSKDKALDSEANIMKQNSGIIASENTSNNSLDDGGDLLDEETLREDARPYEYSYSTGSHTDEDKDGDEDSGNKNQNSPKEKQTVPEVRAGSKNIDIMALQSIRSIRPQKCVKVKVEPQEGSDNPENPDDFLVLSKDSKFELSGNQVKEQQSNSQAEAKKDCEDSLGKDSLRERWRKHLKGPLTQKYIGISQNFNKEANVQFFTEMKPCQENSEQDISELLGKSGTIESGGVLKTEDGSWSGISSSAAFSIIPRRATKGRRGSRHFQGHLLLPREQMKPKQQTKDGRSSAADFTVLDLEDEDEEDEKTDDSLDEIVDVVSGYQSEEVDVEKNNYVDYLEDDEQVDVETIEELSEEINFPYKKTTATHTQSFKQQCHSHISADEKASEKSRKVSLISSKLKDDCWGDKPHKETEAFAYYRRTHTANERRRRGEMRDLFEKLKITLGLLHSSKVSKSLILNRAFSEIQGLTDQADKLIGQKNLLSRKRSILIRKVSSLSGKTEEVVLKKLEYIYAKQQALEAQKRKKKLGSDEFCVSPRIGTQLEGSSASSVDLGQMLMNNRRGKPLILSRKRDQATENASPSDTPHSSANLVMTPQGQLLTLKGPLFSGPVVAVSPALLEGGLKPQVASSTMSQSENDDLFMMPRIVNVTSLAAEEDLGGMSGNKYRHEVPDGKPLDHLRDIAGSEASSLKDTERISSRGNHRDSRKALGPTQVLLANKDSGFPHVADVSTMQAAQEFIPKNMSGDVRGHRYKWKECELRGERLKSKESQFHKLKMKDLKDSSIEMELRKVASAIEEAALHPSELLTNMEDEDDTDETLTSLLNEIAFLNQQLNDDSGLAELSGSMDTEFSGDAQRAFISKLAPGNRSAFQVGHLGAGVKELPDVQEESESISPLLLHLEDDDFSENEKQLGDTASEPDVLKIVIDPEIKDSLVSHRKSSDGGQSTSGLPAEPESVSSPPILHMKTGPENSNTDTLWRPMPKLAPLGLKVANPPSDADGQSLKVMPALAPIAAKVGSIGHKMNLAGIDQEGRGSKVMPTLAPVVPKLGNSGAPSSSSGK.

Residues lysine 4 and lysine 178 each participate in a glycyl lysine isopeptide (Lys-Gly) (interchain with G-Cter in SUMO2) cross-link. The segment at residues 84–260 (MWNEFHNRST…YNPFAKGFRD (177 aa)) is a DNA-binding region (T-box). The segment covering 259–277 (RDDGLSSKPQREGKQRNSS) has biased composition (basic and acidic residues). A disordered region spans residues 259–290 (RDDGLSSKPQREGKQRNSSDQEGNSVSSSPAH). Polar residues predominate over residues 278 to 288 (DQEGNSVSSSP). Residues lysine 323, lysine 329, lysine 348, lysine 431, lysine 458, lysine 463, and lysine 480 each participate in a glycyl lysine isopeptide (Lys-Gly) (interchain with G-Cter in SUMO2) cross-link. Serine 531 carries the post-translational modification Phosphoserine. Positions 553–647 (ILDNSSTERI…NIPVGPGSTF (95 aa)) are disordered. A Glycyl lysine isopeptide (Lys-Gly) (interchain with G-Cter in SUMO2) cross-link involves residue lysine 567. Residues 595–607 (KTVTASHSASPNT) show a composition bias toward polar residues. The residue at position 604 (serine 604) is a Phosphoserine. Glycyl lysine isopeptide (Lys-Gly) (interchain with G-Cter in SUMO2) cross-links involve residues lysine 610, lysine 651, lysine 782, lysine 788, lysine 814, and lysine 823. Basic residues predominate over residues 610-621 (KRGRPRKLRLSK). Position 848 is a phosphoserine (serine 848). Residues 871–913 (KQSTISPSTSHSVKPQSVTTASRKTKAQNKQTTLSGRTKSSYK) show a composition bias toward polar residues. Disordered regions lie at residues 871–946 (KQST…TSDN) and 967–987 (LRQA…GLSK). Serine 921 is modified (phosphoserine). Residue lysine 925 forms a Glycyl lysine isopeptide (Lys-Gly) (interchain with G-Cter in SUMO2) linkage. Polar residues predominate over residues 937-946 (KNSLSSTSDN). Low complexity predominate over residues 969-978 (QAQQQHLQQQ). Residues lysine 987 and lysine 1088 each participate in a glycyl lysine isopeptide (Lys-Gly) (interchain with G-Cter in SUMO2) cross-link. Residues 1111 to 1130 (LGEEGREGGGVREDEEQLKE) are disordered. The span at 1113–1122 (EEGREGGGVR) shows a compositional bias: basic and acidic residues. Glycyl lysine isopeptide (Lys-Gly) (interchain with G-Cter in SUMO2) cross-links involve residues lysine 1136, lysine 1158, lysine 1194, and lysine 1202. Disordered regions lie at residues 1186-1215 (QPDL…NPVI), 1246-1277 (QRQL…TKEL), 1297-1323 (SQEK…RSPG), and 1376-1424 (RGEK…DISP). Composition is skewed to low complexity over residues 1248 to 1269 (QLSP…YSSP) and 1303 to 1315 (KSSC…SSTS). A phosphoserine mark is found at serine 1423 and serine 1450. Residues lysine 1454 and lysine 1495 each participate in a glycyl lysine isopeptide (Lys-Gly) (interchain with G-Cter in SUMO2) cross-link. Disordered regions lie at residues 1476–1508 (AKVA…RSGK), 1722–1746 (PPVS…SNNV), 1856–1885 (ISPP…PVGT), 1920–1954 (IKKE…KALD), 1964–1983 (SGII…GGDL), and 1988–2038 (TLRE…AGSK). Composition is skewed to polar residues over residues 1488 to 1507 (LPST…NRSG), 1735 to 1746 (PVTTPQISSNNV), and 1859 to 1880 (PETQ…STGG). Residues lysine 1937 and lysine 1944 each participate in a glycyl lysine isopeptide (Lys-Gly) (interchain with G-Cter in SUMO2) cross-link. Residues 1964–1976 (SGIIASENTSNNS) are compositionally biased toward polar residues. Glycyl lysine isopeptide (Lys-Gly) (interchain with G-Cter in SUMO2) cross-links involve residues lysine 2060 and lysine 2084. A disordered region spans residues 2087 to 2110 (LSGNQVKEQQSNSQAEAKKDCEDS). Polar residues predominate over residues 2088-2101 (SGNQVKEQQSNSQA). Residues lysine 2104, lysine 2152, and lysine 2179 each participate in a glycyl lysine isopeptide (Lys-Gly) (interchain with G-Cter in SUMO2) cross-link. Position 2206 is an omega-N-methylarginine (arginine 2206). The interval 2207 to 2255 (GSRHFQGHLLLPREQMKPKQQTKDGRSSAADFTVLDLEDEDEEDEKTDD) is disordered. Positions 2220–2232 (EQMKPKQQTKDGR) are enriched in basic and acidic residues. Residue lysine 2225 forms a Glycyl lysine isopeptide (Lys-Gly) (interchain with G-Cter in SUMO2) linkage. Residues 2242 to 2255 (DLEDEDEEDEKTDD) show a composition bias toward acidic residues. Residues lysine 2317, lysine 2352, lysine 2396, and lysine 2471 each participate in a glycyl lysine isopeptide (Lys-Gly) (interchain with G-Cter in SUMO2) cross-link. One can recognise a bHLH domain in the interval 2362–2413 (YYRRTHTANERRRRGEMRDLFEKLKITLGLLHSSKVSKSLILNRAFSEIQGL). Serine 2480 carries the phosphoserine modification. The disordered stretch occupies residues 2515 to 2534 (KRDQATENASPSDTPHSSAN). A compositionally biased stretch (polar residues) spans 2520–2534 (TENASPSDTPHSSAN). Glycyl lysine isopeptide (Lys-Gly) (interchain with G-Cter in SUMO2) cross-links involve residues lysine 2568 and lysine 2618. Positions 2629 to 2651 (SEASSLKDTERISSRGNHRDSRK) are enriched in basic and acidic residues. The interval 2629 to 2654 (SEASSLKDTERISSRGNHRDSRKALG) is disordered. Lysine 2724 participates in a covalent cross-link: Glycyl lysine isopeptide (Lys-Gly) (interchain with G-Cter in SUMO2). Residues serine 2849 and serine 2860 each carry the phosphoserine modification. Positions 2877 to 2917 (LVSHRKSSDGGQSTSGLPAEPESVSSPPILHMKTGPENSNT) are disordered. Lysine 2979 participates in a covalent cross-link: Glycyl lysine isopeptide (Lys-Gly) (interchain with G-Cter in SUMO2).

In terms of assembly, component of some MLL1/MLL complex, at least composed of the core components KMT2A/MLL1, ASH2L, HCFC1/HCF1, WDR5 and RBBP5, as well as the facultative components BACC1, CHD8, E2F6, HSP70, INO80C, KANSL1, LAS1L, MAX, MCRS1, MGA, MYST1/MOF, PELP1, PHF20, PRP31, RING2, RUVB1/TIP49A, RUVB2/TIP49B, SENP3, TAF1, TAF4, TAF6, TAF7, TAF9 and TEX10. Interacts with ZMYND11. Interacts with MAX. Requires heterodimerization with MAX for E-box binding. As to expression, highly expressed in germ cells and granulosa cells.

It localises to the nucleus. In terms of biological role, functions as a dual-specificity transcription factor, regulating the expression of both MAX-network and T-box family target genes. Functions as a repressor or an activator. Binds to 5'-AATTTCACACCTAGGTGTGAAATT-3' core sequence and seems to regulate MYC-MAX target genes. Suppresses transcriptional activation by MYC and inhibits MYC-dependent cell transformation. Function activated by heterodimerization with MAX. This heterodimerization serves the dual function of both generating an E-box-binding heterodimer and simultaneously blocking interaction of a corepressor. The chain is MAX gene-associated protein from Mus musculus (Mouse).